The chain runs to 125 residues: Small ribosomal subunit protein bS6 (125 aa).

The tract at residues 96-125 (VTEASPMKAAKEERKPLAEVENNDFEDAEE) is disordered. Residues 104-113 (AAKEERKPLA) show a composition bias toward basic and acidic residues. A compositionally biased stretch (acidic residues) spans 116–125 (ENNDFEDAEE).

The protein belongs to the bacterial ribosomal protein bS6 family.

Its function is as follows. Binds together with bS18 to 16S ribosomal RNA. The polypeptide is Small ribosomal subunit protein bS6 (Haemophilus influenzae (strain 86-028NP)).